A 122-amino-acid polypeptide reads, in one-letter code: uncharacterized protein (122 aa).

3 helical membrane passes run 21–40 (VWSWRRLFIFRVLNVVSIAI), 57–77 (YTHMAIPLSTCLFCLCLCICI), and 94–114 (LLFSVFHLVFSTIALSIYCIY).

Its subcellular location is the membrane. This is an uncharacterized protein from Saccharomyces cerevisiae (strain ATCC 204508 / S288c) (Baker's yeast).